A 694-amino-acid polypeptide reads, in one-letter code: Type VI secretion system spike protein VgrG2 (694 aa).

This sequence belongs to the VgrG protein family.

It localises to the secreted. Its function is as follows. Part of the type VI secretion system specialized secretion system, which delivers several virulence factors in both prokaryotic and eukaryotic cells during infection. Forms the spike at the tip of the elongating tube formed by haemolysin co-regulated protein Hcp. Allows the delivery of the VasX antibacterial toxin to target cells where it exerts its toxicity. This chain is Type VI secretion system spike protein VgrG2 (vgrG2), found in Vibrio cholerae serotype O1 (strain ATCC 39315 / El Tor Inaba N16961).